We begin with the raw amino-acid sequence, 42 residues long: Photosystem II reaction center protein J (42 aa).

Residues 10–30 (IPLWLVGTVVGLLAIGLLALF) form a helical membrane-spanning segment.

The protein belongs to the PsbJ family. In terms of assembly, PSII is composed of 1 copy each of membrane proteins PsbA, PsbB, PsbC, PsbD, PsbE, PsbF, PsbH, PsbI, PsbJ, PsbK, PsbL, PsbM, PsbT, PsbX, PsbY, PsbZ, Psb30/Ycf12, at least 3 peripheral proteins of the oxygen-evolving complex and a large number of cofactors. It forms dimeric complexes.

It is found in the plastid. The protein resides in the chloroplast thylakoid membrane. Its function is as follows. One of the components of the core complex of photosystem II (PSII). PSII is a light-driven water:plastoquinone oxidoreductase that uses light energy to abstract electrons from H(2)O, generating O(2) and a proton gradient subsequently used for ATP formation. It consists of a core antenna complex that captures photons, and an electron transfer chain that converts photonic excitation into a charge separation. The chain is Photosystem II reaction center protein J from Mesostigma viride (Green alga).